Consider the following 1411-residue polypeptide: Protein ECM5 (1411 aa).

A JmjN domain is found at 118-159 (IPTFILAKKELPDPIKFYELVEDLGSVYGCVKLKIIPDADKF). An ARID domain is found at 185–279 (RTKIVDFYAK…ILLDFDIYEE (95 aa)). The interval 285-312 (RNNEKNEDMVESEIFRHSNSRSRDEEEP) is disordered. Residues 476–695 (KNILDQWNLD…FSSEAAKWTS (220 aa)) enclose the JmjC domain. The segment at 1238–1290 (TKYCFCRRVEEGTAMVECEICKEWYHVDCISNGELVPPDDPNVLFVCSICTPP) adopts a PHD-type zinc-finger fold.

Its subcellular location is the nucleus. In terms of biological role, may be involved in cell wall organization and biogenesis. This Saccharomyces cerevisiae (strain ATCC 204508 / S288c) (Baker's yeast) protein is Protein ECM5 (ECM5).